Here is a 508-residue protein sequence, read N- to C-terminus: Photosystem II CP47 reaction center protein (508 aa).

The next 6 helical transmembrane spans lie at 21–36 (AVHL…WAGS), 101–115 (ITLS…IWHW), 140–156 (GIHL…FGAF), 203–218 (IAAG…FHLS), 237–252 (VLSS…AFVV), and 457–472 (TFAL…HGAR).

Belongs to the PsbB/PsbC family. PsbB subfamily. PSII is composed of 1 copy each of membrane proteins PsbA, PsbB, PsbC, PsbD, PsbE, PsbF, PsbH, PsbI, PsbJ, PsbK, PsbL, PsbM, PsbT, PsbX, PsbY, PsbZ, Psb30/Ycf12, at least 3 peripheral proteins of the oxygen-evolving complex and a large number of cofactors. It forms dimeric complexes. Binds multiple chlorophylls. PSII binds additional chlorophylls, carotenoids and specific lipids. serves as cofactor.

Its subcellular location is the plastid. It localises to the chloroplast thylakoid membrane. In terms of biological role, one of the components of the core complex of photosystem II (PSII). It binds chlorophyll and helps catalyze the primary light-induced photochemical processes of PSII. PSII is a light-driven water:plastoquinone oxidoreductase, using light energy to abstract electrons from H(2)O, generating O(2) and a proton gradient subsequently used for ATP formation. The protein is Photosystem II CP47 reaction center protein of Psilotum nudum (Whisk fern).